Reading from the N-terminus, the 190-residue chain is Large ribosomal subunit protein uL10 (190 aa).

The protein belongs to the universal ribosomal protein uL10 family. Part of the ribosomal stalk of the 50S ribosomal subunit. The N-terminus interacts with L11 and the large rRNA to form the base of the stalk. The C-terminus forms an elongated spine to which L12 dimers bind in a sequential fashion forming a multimeric L10(L12)X complex.

Forms part of the ribosomal stalk, playing a central role in the interaction of the ribosome with GTP-bound translation factors. The chain is Large ribosomal subunit protein uL10 from Trichodesmium erythraeum (strain IMS101).